The following is a 38-amino-acid chain: uncharacterized protein (38 aa).

It belongs to the asfivirus C84L family.

This is an uncharacterized protein from Ornithodoros (relapsing fever ticks).